The sequence spans 53 residues: UPF0391 membrane protein ECA0470 (53 aa).

A run of 2 helical transmembrane segments spans residues 4 to 24 (WGIIFLVIALIAAALGFGGLA) and 30 to 47 (AAKIVFVVGIILFLVSLF).

Belongs to the UPF0391 family.

Its subcellular location is the cell membrane. This is UPF0391 membrane protein ECA0470 from Pectobacterium atrosepticum (strain SCRI 1043 / ATCC BAA-672) (Erwinia carotovora subsp. atroseptica).